The primary structure comprises 320 residues: Delta-aminolevulinic acid dehydratase (320 aa).

3 residues coordinate Zn(2+): Cys119, Cys121, and Cys129. Lys194 acts as the Schiff-base intermediate with substrate in catalysis. Residues Arg204 and Arg216 each contribute to the 5-aminolevulinate site. Glu232 serves as a coordination point for Mg(2+). Residue Lys247 is the Schiff-base intermediate with substrate of the active site. A 5-aminolevulinate-binding site is contributed by Ser273.

The protein belongs to the ALAD family. In terms of assembly, homooctamer. The cofactor is Zn(2+).

The enzyme catalyses 2 5-aminolevulinate = porphobilinogen + 2 H2O + H(+). The protein operates within porphyrin-containing compound metabolism; protoporphyrin-IX biosynthesis; coproporphyrinogen-III from 5-aminolevulinate: step 1/4. Its function is as follows. Catalyzes an early step in the biosynthesis of tetrapyrroles. Binds two molecules of 5-aminolevulinate per subunit, each at a distinct site, and catalyzes their condensation to form porphobilinogen. The sequence is that of Delta-aminolevulinic acid dehydratase (hemB) from Methanothermus sociabilis.